Here is a 491-residue protein sequence, read N- to C-terminus: uncharacterized protein (491 aa).

Residue tryptophan 99 participates in substrate binding. Asparagine 137 contacts Ca(2+). Histidine 138 contributes to the substrate binding site. Residues glutamate 177 and aspartate 190 each coordinate Ca(2+). Position 219 (arginine 219) interacts with substrate. Ca(2+)-binding residues include aspartate 221, histidine 225, and glutamate 245. The Nucleophile role is filled by aspartate 221. Substrate is bound at residue 224–225 (KH). Glutamate 245 acts as the Proton donor in catalysis. Substrate contacts are provided by glycine 249, histidine 312, and arginine 360.

The protein belongs to the glycosyl hydrolase 13 family. The cofactor is Ca(2+).

It localises to the cytoplasm. Its subcellular location is the nucleus. This is an uncharacterized protein from Schizosaccharomyces pombe (strain 972 / ATCC 24843) (Fission yeast).